Consider the following 187-residue polypeptide: UPF0301 protein Spro_4027 (187 aa).

This sequence belongs to the UPF0301 (AlgH) family.

This Serratia proteamaculans (strain 568) protein is UPF0301 protein Spro_4027.